The sequence spans 449 residues: Gamma-glutamyl phosphate reductase (449 aa).

Belongs to the gamma-glutamyl phosphate reductase family.

It is found in the cytoplasm. The catalysed reaction is L-glutamate 5-semialdehyde + phosphate + NADP(+) = L-glutamyl 5-phosphate + NADPH + H(+). The protein operates within amino-acid biosynthesis; L-proline biosynthesis; L-glutamate 5-semialdehyde from L-glutamate: step 2/2. Its function is as follows. Catalyzes the NADPH-dependent reduction of L-glutamate 5-phosphate into L-glutamate 5-semialdehyde and phosphate. The product spontaneously undergoes cyclization to form 1-pyrroline-5-carboxylate. In Methanococcoides burtonii (strain DSM 6242 / NBRC 107633 / OCM 468 / ACE-M), this protein is Gamma-glutamyl phosphate reductase.